The chain runs to 209 residues: MATQSNKEAFLGGFKKLLNEQWQADVRLKAGDSDETTSIFAHKLVLVARSEVFKKILESDEFKASSKQMETVTLSEMKHEELEAFVEFIYRVDGSICSASLKKHARSLFHAADKYEIPHLRDLCRNELISSLNSSNALSILELAQIPFDKALNDPAFTTIITNISTIASGDEFKLFVANHPNLAVDIMKASITRLSTSRKICGYCNRYY.

The 75-residue stretch at 24–98 (ADVRLKAGDS…IYRVDGSICS (75 aa)) folds into the BTB domain.

Its pathway is protein modification; protein ubiquitination. Its function is as follows. May act as a substrate-specific adapter of an E3 ubiquitin-protein ligase complex (CUL3-RBX1-BTB) which mediates the ubiquitination and subsequent proteasomal degradation of target proteins. In Arabidopsis thaliana (Mouse-ear cress), this protein is Putative BTB/POZ domain-containing protein At2g40450.